We begin with the raw amino-acid sequence, 246 residues long: Probable chemoreceptor glutamine deamidase CheD (246 aa).

Residues 225–246 are disordered; that stretch reads GAGVQPAVQKAASPYAANLSRK.

It belongs to the CheD family.

The enzyme catalyses L-glutaminyl-[protein] + H2O = L-glutamyl-[protein] + NH4(+). In terms of biological role, probably deamidates glutamine residues to glutamate on methyl-accepting chemotaxis receptors (MCPs), playing an important role in chemotaxis. The sequence is that of Probable chemoreceptor glutamine deamidase CheD from Burkholderia vietnamiensis (strain G4 / LMG 22486) (Burkholderia cepacia (strain R1808)).